The following is a 677-amino-acid chain: MAVKVHTTKRGDPHELRNIFLQYASTEVDGEHYMTPEDFVQRYLGLYNDPNSNPKIVQLLAGVADQTKDGLISYQEFLAFESVLCAPDSMFIVAFQLFDKSGNGEVTFENVKEIFGQTIIHHHIPFNWDCEFIRLHFGHNRKKHLNYVEFTQFLQELQLEHARQAFALKDKSKSGMISGLDFSDVMVTIRSHMLTPFVEENLVSAAGGGTSHQVSFSYFNAFNSLLNNMELVRKIYSTLAGTRKDIEVTKEEFAQSAIRYGQVTPLEIDILYQLADLYNASGRLTLADIERIAPLAEGALPYNLAELQRQQSPGLGRPIWLQIAESAYRFTLGSVAGAVGATAVYPIDLVKTRMQNQRGTGSVVGELMYKNSFDCFKKVLRYEGFFGLYRGLIPQLIGVAPEKAIKLTVNDFVRDKFTKRDGSIPLPAEILAGGCAGGSQVIFTNPLEIVKIRLQVAGEITTGPRVSALNVLQDLGLFGLYKGAKACFLRDIPFSAIYFPVYAHCKLLLADENGRVGGINLLTAGALAGVPAASLVTPADVIKTRLQVAARAGQTTYSGVVDCFRKILREEGPSAFWKGTAARVFRSSPQFGVTLVTYELLQRWFYIDFGGLKPSGSEPTPKSRIADLPPANPDHIGGYRLATATFAGIENKFGLYLPKFKSPSVAVAQPKAAAAAQ.

An N-acetylalanine modification is found at Ala2. Residues 2–294 (AVKVHTTKRG…TLADIERIAP (293 aa)) form a regulatory N-terminal domain region. The Mitochondrial intermembrane segment spans residues 2-329 (AVKVHTTKRG…WLQIAESAYR (328 aa)). 4 EF-hand domains span residues 40–85 (VQRY…SVLC), 86–121 (APDS…TIIH), 122–156 (HHIP…FLQE), and 157–192 (LQLE…IRSH). Ca(2+) is bound by residues Asp65, Thr67, Asp69, Leu71, and Glu76. The tract at residues 295-310 (LAEGALPYNLAELQRQ) is linker loop domain. Residues 320-612 (WLQIAESAYR…RWFYIDFGGL (293 aa)) form a carrier domain region. Solcar repeat units follow at residues 324–416 (AESA…VRDK), 424–508 (IPLP…CKLL), and 516–604 (VGGI…LQRW). Residues 330–347 (FTLGSVAGAVGATAVYPI) form a helical membrane-spanning segment. At 348 to 390 (DLVKTRMQNQRGTGSVVGELMYKNSFDCFKKVLRYEGFFGLYR) the chain is on the mitochondrial matrix side. The helical transmembrane segment at 391–410 (GLIPQLIGVAPEKAIKLTVN) threads the bilayer. Topologically, residues 411–433 (DFVRDKFTKRDGSIPLPAEILAG) are mitochondrial intermembrane. The chain crosses the membrane as a helical span at residues 434 to 447 (GCAGGSQVIFTNPL). The Mitochondrial matrix segment spans residues 448 to 482 (EIVKIRLQVAGEITTGPRVSALNVLQDLGLFGLYK). The chain crosses the membrane as a helical span at residues 483-502 (GAKACFLRDIPFSAIYFPVY). The Mitochondrial intermembrane portion of the chain corresponds to 503-521 (AHCKLLLADENGRVGGINL). Residues 522 to 539 (LTAGALAGVPAASLVTPA) traverse the membrane as a helical segment. Residues 540-578 (DVIKTRLQVAARAGQTTYSGVVDCFRKILREEGPSAFWK) lie on the Mitochondrial matrix side of the membrane. A helical transmembrane segment spans residues 579–598 (GTAARVFRSSPQFGVTLVTY). Topologically, residues 599 to 677 (ELLQRWFYID…AQPKAAAAAQ (79 aa)) are mitochondrial intermembrane. Residues 613–677 (KPSGSEPTPK…AQPKAAAAAQ (65 aa)) form a C-terminal domain region.

The protein belongs to the mitochondrial carrier (TC 2.A.29) family. Homodimer (via N-terminus).

It is found in the mitochondrion inner membrane. The catalysed reaction is L-aspartate(in) + L-glutamate(out) + H(+)(out) = L-aspartate(out) + L-glutamate(in) + H(+)(in). The enzyme catalyses 3-sulfino-L-alanine(out) + L-glutamate(in) + H(+)(in) = 3-sulfino-L-alanine(in) + L-glutamate(out) + H(+)(out). It catalyses the reaction 3-sulfino-L-alanine(out) + L-aspartate(in) = 3-sulfino-L-alanine(in) + L-aspartate(out). In terms of biological role, mitochondrial electrogenic aspartate/glutamate antiporter that favors efflux of aspartate and entry of glutamate and proton within the mitochondria as part of the malate-aspartate shuttle. Also mediates the uptake of L-cysteinesulfinate (3-sulfino-L-alanine) by mitochondria in exchange of L-glutamate and proton. Can also exchange L-cysteinesulfinate with aspartate in their anionic form without any proton translocation. Lacks transport activity towards L-glutamine or gamma-aminobutyric acid (GABA). In Mus musculus (Mouse), this protein is Electrogenic aspartate/glutamate antiporter SLC25A12, mitochondrial.